We begin with the raw amino-acid sequence, 444 residues long: Glycine receptor subunit alphaZ1 (444 aa).

Positions 1–24 (MFALGIYLWETIVFFSLAASQQAA) are cleaved as a signal peptide. Topologically, residues 25–246 (ARKAASPMPP…RFHLERQMGY (222 aa)) are extracellular. A glycan (N-linked (GlcNAc...) asparagine) is linked at N62. Residues R89 and S153 each coordinate glycine. Residues C162 and C176 are joined by a disulfide bond. Zn(2+) contacts are provided by E216 and D218. C222 and C233 are oxidised to a cystine. 226-231 (YNTGKF) lines the strychnine pocket. Residue T228 participates in glycine binding. H239 contributes to the Zn(2+) binding site. A helical membrane pass occupies residues 247–268 (YLIQMYIPSLLIVILSWVSFWI). Topologically, residues 269–273 (NMDAA) are cytoplasmic. Residues 274-294 (PARVGLGITTVLTMTTQSSGS) traverse the membrane as a helical segment. The Extracellular segment spans residues 295-305 (RASLPKVSYVK). The chain crosses the membrane as a helical span at residues 306–326 (AIDIWMAVCLLFVFSALLEYA). The Cytoplasmic portion of the chain corresponds to 327–412 (AVNFIARQHK…FISRAKRIDT (86 aa)). The chain crosses the membrane as a helical span at residues 413-433 (VSRVAFPLVFLIFNIFYWITY). At 434-444 (KIIRSEDIHKQ) the chain is on the extracellular side.

This sequence belongs to the ligand-gated ion channel (TC 1.A.9) family. Glycine receptor (TC 1.A.9.3) subfamily. GLRA1 sub-subfamily. Homopentamer (in vitro). Heteropentamer composed of glra1 and glrb. Both homopentamers and heteropentamers form functional ion channels. Interacts with glrb. Expressed in brain.

It is found in the postsynaptic cell membrane. The protein localises to the synapse. It localises to the perikaryon. The protein resides in the cell projection. Its subcellular location is the dendrite. It is found in the cell membrane. The enzyme catalyses chloride(in) = chloride(out). Its activity is regulated as follows. Activated by glycine and taurine. Inhibited by strychnine. Allosterically activated by ivermectin. Inhibited by picrotoxinin. Strychnine binding locks the channel in a closed conformation and prevents channel opening in response to extracellular glycine. Can also be activated by GABA and inhibited by bicuculline, but this requires heterologous expression in human cells. Functionally, subunit of heteromeric glycine-gated chloride channels. Plays an important role in the down-regulation of neuronal excitability. Contributes to the generation of inhibitory postsynaptic currents. Channel activity is potentiated by ethanol. This Danio rerio (Zebrafish) protein is Glycine receptor subunit alphaZ1 (glra1).